The chain runs to 1925 residues: Plexin-D1 (1925 aa).

Residues 1 to 18 (MAPRAAGGAPLSARAAAA) are compositionally biased toward low complexity. Residues 1-23 (MAPRAAGGAPLSARAAAASPPPF) are disordered. The first 46 residues, 1–46 (MAPRAAGGAPLSARAAAASPPPFQTPPRCPVPLLLLLLLGAARAGA), serve as a signal peptide directing secretion. Residues 47–546 (LEIQRRFPSP…TSHQMARVKV (500 aa)) form the Sema domain. Residues 47–1271 (LEIQRRFPSP…TLQLGGSETA (1225 aa)) lie on the Extracellular side of the membrane. Asn-86 carries N-linked (GlcNAc...) asparagine glycosylation. Cystine bridges form between Cys-104–Cys-114 and Cys-140–Cys-148. Asn-155, Asn-188, and Asn-224 each carry an N-linked (GlcNAc...) asparagine glycan. Disulfide bonds link Cys-322-Cys-445 and Cys-345-Cys-389. N-linked (GlcNAc...) asparagine glycans are attached at residues Asn-481 and Asn-500. Intrachain disulfides connect Cys-549–Cys-566, Cys-555–Cys-600, Cys-558–Cys-575, Cys-569–Cys-581, and Cys-637–Cys-661. N-linked (GlcNAc...) asparagine glycosylation occurs at Asn-583. Asn-696, Asn-736, Asn-802, Asn-965, Asn-1017, Asn-1060, Asn-1099, Asn-1118, Asn-1132, Asn-1237, and Asn-1257 each carry an N-linked (GlcNAc...) asparagine glycan. IPT/TIG domains lie at 891 to 979 (PEIH…FSYV), 981 to 1066 (PLVH…FWYM), and 1069 to 1160 (PVIT…LDPE). A helical membrane pass occupies residues 1272–1292 (IIVSIVICSVLLLLSVVALFV). Topologically, residues 1293–1925 (FCTKSRRAER…DNIYECYSEA (633 aa)) are cytoplasmic.

The protein belongs to the plexin family. In terms of assembly, interacts with NRP1 and SEMA4A. Interacts with SH3BP1; they dissociate upon SEMA3E binding to PLXND1 allowing SH3BP1 to transduce downstream signal through RAC1 inactivation. As to expression, detected at low levels in heart, placenta, lung, skeletal muscle, kidney, thymus and liver. Detected at very low levels in brain, colon, spleen, small intestine and peripheral blood leukocytes.

It localises to the cell membrane. The protein localises to the cell projection. Its subcellular location is the lamellipodium membrane. Cell surface receptor for SEMA4A and for class 3 semaphorins, such as SEMA3A, SEMA3C and SEMA3E. Plays an important role in cell-cell signaling, and in regulating the migration of a wide spectrum of cell types. Regulates the migration of thymocytes in the medulla. Regulates endothelial cell migration. Plays an important role in ensuring the specificity of synapse formation. Required for normal development of the heart and vasculature. Mediates anti-angiogenic signaling in response to SEMA3E. The chain is Plexin-D1 (PLXND1) from Homo sapiens (Human).